A 406-amino-acid polypeptide reads, in one-letter code: Serine hydroxymethyltransferase (406 aa).

(6S)-5,6,7,8-tetrahydrofolate contacts are provided by residues Leu-111 and 115 to 117; that span reads GHL. Lys-220 is subject to N6-(pyridoxal phosphate)lysine. 340-342 provides a ligand contact to (6S)-5,6,7,8-tetrahydrofolate; the sequence is SAF.

This sequence belongs to the SHMT family. Homodimer. The cofactor is pyridoxal 5'-phosphate.

It is found in the cytoplasm. It carries out the reaction (6R)-5,10-methylene-5,6,7,8-tetrahydrofolate + glycine + H2O = (6S)-5,6,7,8-tetrahydrofolate + L-serine. Its pathway is one-carbon metabolism; tetrahydrofolate interconversion. It functions in the pathway amino-acid biosynthesis; glycine biosynthesis; glycine from L-serine: step 1/1. Catalyzes the reversible interconversion of serine and glycine with tetrahydrofolate (THF) serving as the one-carbon carrier. This reaction serves as the major source of one-carbon groups required for the biosynthesis of purines, thymidylate, methionine, and other important biomolecules. Also exhibits THF-independent aldolase activity toward beta-hydroxyamino acids, producing glycine and aldehydes, via a retro-aldol mechanism. The sequence is that of Serine hydroxymethyltransferase from Mycoplasma genitalium (strain ATCC 33530 / DSM 19775 / NCTC 10195 / G37) (Mycoplasmoides genitalium).